A 287-amino-acid chain; its full sequence is Centromere protein P (287 aa).

A coiled-coil region spans residues 1–37; that stretch reads MDNSVYQVYEDEIQLLEEEIKLLSDKYEDIQQESTFF.

The protein belongs to the CENP-P/CTF19 family. Component of the CENPA-HI complex, at least composed of CENPH, CENPI, CENPK, CENPL, CENPM, CENPO and CENPP.

The protein localises to the nucleus. It localises to the chromosome. Its subcellular location is the centromere. Functionally, component of the CENPA-HI complex, a centromeric complex involved in assembly of kinetochore proteins, mitotic progression and chromosome segregation. The chain is Centromere protein P (CENPP) from Gallus gallus (Chicken).